We begin with the raw amino-acid sequence, 294 residues long: MQIRRRPPNPAVEVDILRYQVPDPNGKANHILEEIVWHKEKEVERMRDRLSLLDLRKQEQSAPPAKDFLGAISQGKTQPALIAEVKKASPSKGVIREDFEPVAIAQAYVQGGASCLSVLTDSKFFQGSFDNLALVRQAVDIPLLCKEFIIYPYQIYLARVKGADAILLIAAILKDSDLQYLIKIIHGLGMTPLVEVHSLAELDRVLAIEGVSLVGINNRNLETFEVSLETTTNLITARQDEIKERGIYIVSESGIHTPQHLQQVTEAGANAVLIGESLVKQDDPTQAIANLFSF.

Belongs to the TrpC family.

It carries out the reaction 1-(2-carboxyphenylamino)-1-deoxy-D-ribulose 5-phosphate + H(+) = (1S,2R)-1-C-(indol-3-yl)glycerol 3-phosphate + CO2 + H2O. Its pathway is amino-acid biosynthesis; L-tryptophan biosynthesis; L-tryptophan from chorismate: step 4/5. The polypeptide is Indole-3-glycerol phosphate synthase (Crocosphaera subtropica (strain ATCC 51142 / BH68) (Cyanothece sp. (strain ATCC 51142))).